The chain runs to 206 residues: Small ribosomal subunit protein uS4 (206 aa).

Residues 96 to 156 enclose the S4 RNA-binding domain; sequence TRLDNVVYRM…EKSRTQARIK (61 aa).

It belongs to the universal ribosomal protein uS4 family. Part of the 30S ribosomal subunit. Contacts protein S5. The interaction surface between S4 and S5 is involved in control of translational fidelity.

Functionally, one of the primary rRNA binding proteins, it binds directly to 16S rRNA where it nucleates assembly of the body of the 30S subunit. With S5 and S12 plays an important role in translational accuracy. This Shewanella sp. (strain MR-4) protein is Small ribosomal subunit protein uS4.